A 257-amino-acid polypeptide reads, in one-letter code: Phycoerythrobilin:ferredoxin oxidoreductase (257 aa).

This sequence belongs to the HY2 family.

The enzyme catalyses (3Z)-phycoerythrobilin + oxidized 2[4Fe-4S]-[ferredoxin] = 15,16-dihydrobiliverdin + reduced 2[4Fe-4S]-[ferredoxin] + 2 H(+). Functionally, catalyzes the two-electron reduction of the C2 and C3(1) diene system of 15,16-dihydrobiliverdin. In Synechococcus sp. (strain CC9311), this protein is Phycoerythrobilin:ferredoxin oxidoreductase.